Here is an 859-residue protein sequence, read N- to C-terminus: Mismatch repair endonuclease PMS2 (859 aa).

5 residues coordinate ATP: Asn-45, Asp-70, Glu-109, Ala-110, and Leu-111. Disordered stretches follow at residues 391 to 413 (ELEK…ADEK), 427 to 455 (LHPT…RGVL), and 469 to 555 (RGSQ…KPED). 2 stretches are compositionally biased toward basic and acidic residues: residues 427 to 439 (LHPT…RGPE) and 485 to 495 (CMDREKIEKDS). The span at 512–525 (EVASSFSSDYNVSS) shows a compositional bias: polar residues. Residues 574-577 (KRFK) carry the Nuclear localization signal motif. Positions 578–597 (TEERPSNVNISQRLPGPQST) are disordered. Positions 583 to 597 (SNVNISQRLPGPQST) are enriched in polar residues.

This sequence belongs to the DNA mismatch repair MutL/HexB family. Heterodimer of PMS2 and MLH1 (MutL alpha); this interaction is required for the stability of both partners. Forms a ternary complex with MutS alpha (MSH2-MSH6) or MutS beta (MSH2-MSH3). Part of the BRCA1-associated genome surveillance complex (BASC), which contains BRCA1, MSH2, MSH6, MLH1, ATM, BLM, PMS2 and the RAD50-MRE11-NBS1 protein complex. This association could be a dynamic process changing throughout the cell cycle and within subnuclear domains. Interacts with MTMR15/FAN1.

It localises to the nucleus. It catalyses the reaction ATP + H2O = ADP + phosphate + H(+). In terms of biological role, component of the post-replicative DNA mismatch repair system (MMR). Heterodimerizes with MLH1 to form MutL alpha. DNA repair is initiated by MutS alpha (MSH2-MSH6) or MutS beta (MSH2-MSH3) binding to a dsDNA mismatch, then MutL alpha is recruited to the heteroduplex. Assembly of the MutL-MutS-heteroduplex ternary complex in presence of RFC and PCNA is sufficient to activate endonuclease activity of PMS2. It introduces single-strand breaks near the mismatch and thus generates new entry points for the exonuclease EXO1 to degrade the strand containing the mismatch. DNA methylation would prevent cleavage and therefore assure that only the newly mutated DNA strand is going to be corrected. MutL alpha (MLH1-PMS2) interacts physically with the clamp loader subunits of DNA polymerase III, suggesting that it may play a role to recruit the DNA polymerase III to the site of the MMR. Also implicated in DNA damage signaling, a process which induces cell cycle arrest and can lead to apoptosis in case of major DNA damages. Possesses an ATPase activity, but in the absence of gross structural changes, ATP hydrolysis may not be necessary for proficient mismatch repair. The chain is Mismatch repair endonuclease PMS2 from Mus musculus (Mouse).